The following is a 62-amino-acid chain: Small ribosomal subunit protein eS17 (62 aa).

Belongs to the eukaryotic ribosomal protein eS17 family.

The polypeptide is Small ribosomal subunit protein eS17 (Methanoculleus marisnigri (strain ATCC 35101 / DSM 1498 / JR1)).